Here is a 726-residue protein sequence, read N- to C-terminus: Kinesin-like protein KIN-10B (726 aa).

Disordered stretches follow at residues 1–20 (MEQQ…RVVA), 60–82 (AATA…QQQK), and 402–423 (KNAR…TANR). The region spanning 15-359 (GVRVVARICP…LALASRSSQV (345 aa)) is the Kinesin motor domain. The span at 408–423 (FNNSGVKGGQTPTANR) shows a compositional bias: polar residues.

Belongs to the TRAFAC class myosin-kinesin ATPase superfamily. Kinesin family. KIN-10 subfamily.

The protein is Kinesin-like protein KIN-10B of Oryza sativa subsp. japonica (Rice).